The chain runs to 172 residues: Disulfide bond formation protein B (172 aa).

At 1–11 the chain is on the cytoplasmic side; it reads MNPFRWGFRAQ. A helical transmembrane segment spans residues 12 to 28; it reads FLLGFLACAGLLAYAIY. Topologically, residues 29 to 46 are periplasmic; that stretch reads VQLHLGLEPCPLCIFQRI. A disulfide bridge links cysteine 38 with cysteine 41. Residues 47–63 form a helical membrane-spanning segment; that stretch reads AFATLALLFLLGALHGP. Topologically, residues 64 to 70 are cytoplasmic; that stretch reads RGAGGRK. A helical transmembrane segment spans residues 71–88; the sequence is AYGVLAFIAAGVGMGIAA. At 89–145 the chain is on the periplasmic side; sequence RHVWVQIRPKDMMSSCGPPLSFLSETMGPFEVFRTVLTGTGDCGNIDWRFLGLSMPM. Cysteine 104 and cysteine 131 are disulfide-bonded. Residues 146–164 traverse the membrane as a helical segment; sequence WSMVWFVGLALWALYAGFK. The Cytoplasmic portion of the chain corresponds to 165–172; sequence HRGPRKLF.

Belongs to the DsbB family.

Its subcellular location is the cell inner membrane. Its function is as follows. Required for disulfide bond formation in some periplasmic proteins. Acts by oxidizing the DsbA protein. The protein is Disulfide bond formation protein B of Xanthomonas campestris pv. campestris (strain 8004).